The following is a 147-amino-acid chain: MSCRKPANYRYGEHTADVLVQAFGCTLEEAFKNAAVALADLTYYSERVEPRMAKKVEVEYDDLEGLLFKWIDELLFLFDAEKFAWGRNIEVELRQGVGYRISATLHGEMYDINKHGFTGLIVKAMTFHMMEIKKVDDYWVLQYVVDI.

3 residues coordinate Ca(2+): aspartate 17, aspartate 146, and isoleucine 147.

The protein belongs to the archease family.

Functionally, activates the tRNA-splicing ligase complex by facilitating the enzymatic turnover of catalytic subunit RtcB. Acts by promoting the guanylylation of RtcB, a key intermediate step in tRNA ligation. Can also alter the NTP specificity of RtcB such that ATP, dGTP or ITP is used efficiently. The sequence is that of Protein archease from Pyrobaculum calidifontis (strain DSM 21063 / JCM 11548 / VA1).